A 427-amino-acid polypeptide reads, in one-letter code: 3-phosphoshikimate 1-carboxyvinyltransferase (427 aa).

3-phosphoshikimate contacts are provided by lysine 22, serine 23, and arginine 27. Residue lysine 22 participates in phosphoenolpyruvate binding. Glycine 96 and arginine 124 together coordinate phosphoenolpyruvate. The 3-phosphoshikimate site is built by serine 170, serine 171, glutamine 172, serine 198, aspartate 313, asparagine 336, and lysine 340. Glutamine 172 is a binding site for phosphoenolpyruvate. Aspartate 313 acts as the Proton acceptor in catalysis. Residues arginine 344, arginine 386, and lysine 411 each contribute to the phosphoenolpyruvate site.

This sequence belongs to the EPSP synthase family. As to quaternary structure, monomer.

It localises to the cytoplasm. The catalysed reaction is 3-phosphoshikimate + phosphoenolpyruvate = 5-O-(1-carboxyvinyl)-3-phosphoshikimate + phosphate. The protein operates within metabolic intermediate biosynthesis; chorismate biosynthesis; chorismate from D-erythrose 4-phosphate and phosphoenolpyruvate: step 6/7. Catalyzes the transfer of the enolpyruvyl moiety of phosphoenolpyruvate (PEP) to the 5-hydroxyl of shikimate-3-phosphate (S3P) to produce enolpyruvyl shikimate-3-phosphate and inorganic phosphate. This Aeromonas salmonicida (strain A449) protein is 3-phosphoshikimate 1-carboxyvinyltransferase.